The following is a 417-amino-acid chain: Protein translocase subunit SecD (417 aa).

Transmembrane regions (helical) follow at residues 9–29 (LLVS…PLVS), 236–256 (ASMK…LLYY), 258–278 (LSGL…LAVM), 288–308 (PGMA…VLIF), 333–353 (FTTI…LFYL), and 360–380 (GFAV…VTVT).

This sequence belongs to the SecD/SecF family. SecD subfamily. Forms a complex with SecF. Part of the essential Sec protein translocation apparatus which comprises SecA, SecYEG and auxiliary proteins SecDF. Other proteins may also be involved.

Its subcellular location is the cell membrane. In terms of biological role, part of the Sec protein translocase complex. Interacts with the SecYEG preprotein conducting channel. SecDF uses the proton motive force (PMF) to complete protein translocation after the ATP-dependent function of SecA. In Acidaminococcus fermentans (strain ATCC 25085 / DSM 20731 / CCUG 9996 / CIP 106432 / VR4), this protein is Protein translocase subunit SecD.